The primary structure comprises 498 residues: Ammonium transporter 1 member 1 (498 aa).

11 helical membrane passes run 39 to 59 (LLFS…LCAG), 74 to 94 (VLDA…FAFG), 120 to 140 (FFLF…GSIA), 148 to 168 (YLIY…HWIW), 192 to 212 (FAGS…GALI), 236 to 256 (LVVL…PGSF), 274 to 296 (SGVG…TTLF), 307 to 327 (VVDV…GCSV), 331 to 351 (WAAI…NALA), 360 to 380 (LEAA…TALF), and 411 to 431 (VIQI…LFYG).

This sequence belongs to the ammonia transporter channel (TC 1.A.11.2) family. As to expression, expressed in roots and shoots.

It localises to the membrane. Functionally, ammonium transporter probably involved in ammonium uptake from the soil. The sequence is that of Ammonium transporter 1 member 1 (AMT1-1) from Oryza sativa subsp. japonica (Rice).